A 180-amino-acid polypeptide reads, in one-letter code: Nucleoside-triphosphatase THEP1 (180 aa).

ATP is bound by residues 9–16 and 104–111; these read GPAGVGKT and LIVIDEIG.

It belongs to the THEP1 NTPase family.

It catalyses the reaction a ribonucleoside 5'-triphosphate + H2O = a ribonucleoside 5'-diphosphate + phosphate + H(+). Its function is as follows. Has nucleotide phosphatase activity towards ATP, GTP, CTP, TTP and UTP. May hydrolyze nucleoside diphosphates with lower efficiency. This chain is Nucleoside-triphosphatase THEP1, found in Thermococcus kodakarensis (strain ATCC BAA-918 / JCM 12380 / KOD1) (Pyrococcus kodakaraensis (strain KOD1)).